The sequence spans 379 residues: L-demethylnoviosyl transferase (379 aa).

It belongs to the glycosyltransferase 28 family.

It carries out the reaction dTDP-4-O-demethyl-beta-L-noviose + novobiocic acid = desmethyldescarbamoylnovobiocin + dTDP + H(+). The protein operates within antibiotic biosynthesis; novobiocin biosynthesis. Its activity is regulated as follows. Inhibited by TDP-L-rhamnose, the sugar donor that most closely structurally resembles the natural substrate dTDP-beta-L-noviose. In terms of biological role, catalyzes the transfer of L-noviose from dTDP-4-O-demethyl-beta-L-noviose to the phenolic oxygen of novobiocic acid, creating the full ABC ring system in the novobiocin biosynthesis pathway. Novobiocin is an aminocoumarin family antibiotic that targets bacterial DNA gyrases. Also shows activity with variant coumarin aglycones, suggesting it may be a promiscuous catalyst for noviosylation of a range of planar scaffolds. Does not show activity with TDP-L-rhamnose. The sequence is that of L-demethylnoviosyl transferase (novM) from Streptomyces niveus (Streptomyces spheroides).